We begin with the raw amino-acid sequence, 439 residues long: Oocyte zinc finger protein XlCOF28 (439 aa).

C2H2-type zinc fingers lie at residues 6-28 (YECTECEKTFSNQSVLSLHQRTH), 34-56 (FKCTECEKSFMKRSQLIVHKKCH), 62-84 (YMCTFCEKGYNQHSKLIEHIRTH), 90-112 (FTCTECKKSFTKRCNLTEHLRIH), 118-140 (HKCNLCDKTFHYPSNLVEHQRTH), 146-168 (FQCTECDKSFIKMSKLMVHLRIH), 174-196 (YKCSECDKSFSQQSTLVVHQRTH), 202-224 (FQCSHCEKSFSYHYAFVVHERTH), and 230-252 (YKCSMCDKAYSQRSNLKLHQKTH). Disordered stretches follow at residues 246–275 (KLHQKTHESKPQQDSPNCEKTFEQESAPKT) and 285–304 (AGLEKVPELPEATNSVESPE). 4 C2H2-type zinc fingers span residues 333 to 355 (HKCTECDKCFLEKSKLVVHQRTH), 361 to 383 (FKCSVCDKTFIRMVHLLEHRKIH), 389 to 411 (YTCAECGKSFIRMSKLTVHRRTH), and 417 to 439 (YICAECGKQFSQQSNLVVHQRIH).

The protein belongs to the krueppel C2H2-type zinc-finger protein family.

The protein localises to the nucleus. May be involved in transcriptional regulation. The chain is Oocyte zinc finger protein XlCOF28 from Xenopus laevis (African clawed frog).